The sequence spans 258 residues: uncharacterized protein (258 aa).

The signal sequence occupies residues 1–20 (MKCFQKLYIFILILIVLMAG). Cys21 carries N-palmitoyl cysteine lipidation. The S-diacylglycerol cysteine moiety is linked to residue Cys21.

Belongs to the staphylococcal tandem lipoprotein family.

Its subcellular location is the cell membrane. This is an uncharacterized protein from Staphylococcus aureus (strain COL).